The sequence spans 481 residues: GTPase Obg (481 aa).

One can recognise an Obg domain in the interval 2 to 159; that stretch reads TTFVDRVVLH…IDVVLELKSV (158 aa). An OBG-type G domain is found at 160 to 330; the sequence is ADVGLVGYPS…LMYAMGELVT (171 aa). GTP contacts are provided by residues 166-173, 191-195, 212-215, 282-285, and 311-313; these read GYPSAGKS, FTTLV, DVPG, NKVD, and SAA. Residues Ser173 and Thr193 each coordinate Mg(2+). An OCT domain is found at 348 to 426; that stretch reads PKAVDDAGFT…IGEREFDWQP (79 aa). Over residues 439–452 the composition is skewed to basic and acidic residues; the sequence is GDQRLAEKSERPSA. Positions 439 to 481 are disordered; it reads GDQRLAEKSERPSATERLAARKARRQRPEDEAEADEPVGDGEE. Acidic residues predominate over residues 468–481; the sequence is DEAEADEPVGDGEE.

This sequence belongs to the TRAFAC class OBG-HflX-like GTPase superfamily. OBG GTPase family. As to quaternary structure, monomer. Mg(2+) is required as a cofactor.

It is found in the cytoplasm. Functionally, an essential GTPase which binds GTP, GDP and possibly (p)ppGpp with moderate affinity, with high nucleotide exchange rates and a fairly low GTP hydrolysis rate. Plays a role in control of the cell cycle, stress response, ribosome biogenesis and in those bacteria that undergo differentiation, in morphogenesis control. This chain is GTPase Obg, found in Salinispora tropica (strain ATCC BAA-916 / DSM 44818 / JCM 13857 / NBRC 105044 / CNB-440).